We begin with the raw amino-acid sequence, 122 residues long: uncharacterized protein (122 aa).

Positions 1–17 (MKYSSIFSMLSFFILFA) are cleaved as a signal peptide.

This is an uncharacterized protein from Escherichia coli (strain K12).